Consider the following 172-residue polypeptide: MNPFRWSFRAQFLLGFLACAGLLAYAIYVQLHLGLEPCPLCIFQRIAFAALAMFFLLGALHGPRAAAGRKVYGVLSFIAAGVGMGIAARHVWVQIRPKDMMSSCGPPLSFLSETMGPFEVFRTVLTGTGDCGNIDWRFLGLSMPMWSMVWFVGLALWALYAGFKARRSSVHH.

The Cytoplasmic portion of the chain corresponds to 1 to 11 (MNPFRWSFRAQ). A helical membrane pass occupies residues 12–28 (FLLGFLACAGLLAYAIY). Topologically, residues 29–46 (VQLHLGLEPCPLCIFQRI) are periplasmic. Cys38 and Cys41 are disulfide-bonded. The chain crosses the membrane as a helical span at residues 47–63 (AFAALAMFFLLGALHGP). Residues 64–70 (RAAAGRK) are Cytoplasmic-facing. A helical transmembrane segment spans residues 71 to 88 (VYGVLSFIAAGVGMGIAA). Topologically, residues 89-145 (RHVWVQIRPKDMMSSCGPPLSFLSETMGPFEVFRTVLTGTGDCGNIDWRFLGLSMPM) are periplasmic. A disulfide bond links Cys104 and Cys131. A helical membrane pass occupies residues 146–164 (WSMVWFVGLALWALYAGFK). At 165-172 (ARRSSVHH) the chain is on the cytoplasmic side.

The protein belongs to the DsbB family.

It is found in the cell inner membrane. Functionally, required for disulfide bond formation in some periplasmic proteins. Acts by oxidizing the DsbA protein. In Xanthomonas euvesicatoria pv. vesicatoria (strain 85-10) (Xanthomonas campestris pv. vesicatoria), this protein is Disulfide bond formation protein B.